The sequence spans 111 residues: MVAKIKSGDLVKVIRGKDRGKEGTVKRVLKDDRLIVEGVQIVKKHVRATQQGQQAGIVSVEAPIHRSNVMVIDPETKQPTRVGVVIKEEARDGKVKTVRVRVAKKSGKELA.

The protein belongs to the universal ribosomal protein uL24 family. As to quaternary structure, part of the 50S ribosomal subunit.

In terms of biological role, one of two assembly initiator proteins, it binds directly to the 5'-end of the 23S rRNA, where it nucleates assembly of the 50S subunit. Its function is as follows. One of the proteins that surrounds the polypeptide exit tunnel on the outside of the subunit. The protein is Large ribosomal subunit protein uL24 of Bifidobacterium animalis subsp. lactis (strain AD011).